We begin with the raw amino-acid sequence, 561 residues long: uncharacterized protein (561 aa).

Helical transmembrane passes span 29-49 (FIFNVGSLTPTTAVLGVKKII) and 80-100 (FLFHTVGFFPIYTSTIGAVVI).

It localises to the cell membrane. This is an uncharacterized protein from Mycoplasma pneumoniae (strain ATCC 29342 / M129 / Subtype 1) (Mycoplasmoides pneumoniae).